The primary structure comprises 268 residues: Shikimate dehydrogenase (NADP(+)) (268 aa).

Residues 14–16 (SKS) and T61 each bind shikimate. The active-site Proton acceptor is the K65. N86 and D102 together coordinate shikimate. Residues 126–130 (GAGGA), 149–154 (NRTFSK), and M213 each bind NADP(+). Y215 contacts shikimate. G238 contributes to the NADP(+) binding site.

This sequence belongs to the shikimate dehydrogenase family. Homodimer.

The enzyme catalyses shikimate + NADP(+) = 3-dehydroshikimate + NADPH + H(+). It functions in the pathway metabolic intermediate biosynthesis; chorismate biosynthesis; chorismate from D-erythrose 4-phosphate and phosphoenolpyruvate: step 4/7. Its function is as follows. Involved in the biosynthesis of the chorismate, which leads to the biosynthesis of aromatic amino acids. Catalyzes the reversible NADPH linked reduction of 3-dehydroshikimate (DHSA) to yield shikimate (SA). This chain is Shikimate dehydrogenase (NADP(+)), found in Haemophilus influenzae (strain PittEE).